Consider the following 1358-residue polypeptide: DNA-directed RNA polymerase subunit beta (1358 aa).

This sequence belongs to the RNA polymerase beta chain family. In terms of assembly, the RNAP catalytic core consists of 2 alpha, 1 beta, 1 beta' and 1 omega subunit. When a sigma factor is associated with the core the holoenzyme is formed, which can initiate transcription.

The catalysed reaction is RNA(n) + a ribonucleoside 5'-triphosphate = RNA(n+1) + diphosphate. In terms of biological role, DNA-dependent RNA polymerase catalyzes the transcription of DNA into RNA using the four ribonucleoside triphosphates as substrates. The chain is DNA-directed RNA polymerase subunit beta from Francisella tularensis subsp. holarctica (strain OSU18).